The following is a 1207-amino-acid chain: Dermatan-sulfate epimerase-like protein (1207 aa).

The N-terminal stretch at 1–22 (MAFMFTEHLLFLTLMMCSFSTC) is a signal peptide. N-linked (GlcNAc...) asparagine glycans are attached at residues Asn-28, Asn-661, Asn-683, and Asn-704. 2 helical membrane-spanning segments follow: residues 761–781 (FPFGFKFNIAVGFILCISLVI) and 798–818 (CVLILVIALWFIELLDVWSTC). A glycan (N-linked (GlcNAc...) asparagine) is linked at Asn-869.

It belongs to the dermatan-sulfate isomerase family.

It localises to the membrane. The chain is Dermatan-sulfate epimerase-like protein (Dsel) from Mus musculus (Mouse).